The following is a 477-amino-acid chain: Dihydrolipoyl dehydrogenase (477 aa).

Residues 34–49 (EKYK…GGTC), Lys-58, and Gly-122 contribute to the FAD site. Residues Cys-49 and Cys-54 are joined by a disulfide bond. Residues 188-192 (GAGVI), Glu-211, Val-245, and 276-279 (AVGR) contribute to the NAD(+) site. Positions 319 and 327 each coordinate FAD. Residue His-451 is the Proton acceptor of the active site.

It belongs to the class-I pyridine nucleotide-disulfide oxidoreductase family. In terms of assembly, homodimer. The cofactor is FAD.

It localises to the cytoplasm. It catalyses the reaction N(6)-[(R)-dihydrolipoyl]-L-lysyl-[protein] + NAD(+) = N(6)-[(R)-lipoyl]-L-lysyl-[protein] + NADH + H(+). Functionally, the pyruvate dehydrogenase complex catalyzes the overall conversion of pyruvate to acetyl-CoA and CO(2). It contains multiple copies of three enzymatic components: pyruvate dehydrogenase (E1), dihydrolipoamide acetyltransferase (E2) and lipoamide dehydrogenase (E3). This chain is Dihydrolipoyl dehydrogenase, found in Azotobacter vinelandii.